A 559-amino-acid polypeptide reads, in one-letter code: Hepatocyte nuclear factor 1-beta (559 aa).

Residues 1–31 (MVSKLTSLQQELLSALLSSGVTKEVLVQALE) are dimerization. The region spanning 1–32 (MVSKLTSLQQELLSALLSSGVTKEVLVQALEE) is the HNF-p1 domain. Residues serine 49, serine 52, serine 75, and serine 80 each carry the phosphoserine modification. The 96-residue stretch at 93–188 (KELQALNTEE…ILRQFNQTVQ (96 aa)) folds into the POU-specific atypical domain. Residues 231–312 (MRRNRFKWGP…RRKEEEAFRQ (82 aa)) constitute a DNA-binding region (homeobox; HNF1-type). Over residues 328–341 (NTLLSHSSPHHQPS) the composition is skewed to low complexity. A disordered region spans residues 328 to 371 (NTLLSHSSPHHQPSTSPPNKLPGVRYNQQGNNEVTSSSTISHHG). Residues 353-371 (YNQQGNNEVTSSSTISHHG) are compositionally biased toward polar residues.

It belongs to the HNF1 homeobox family. As to quaternary structure, binds DNA as a dimer. Can form homodimer or heterodimer with HNF1-alpha. Interacts (via HNF-p1 domain) with PCBD1; the interaction increases its transactivation activity.

The protein resides in the nucleus. In terms of biological role, transcription factor that binds to the inverted palindrome 5'-GTTAATNATTAAC-3'. Binds to the FPC element in the cAMP regulatory unit of the PLAU gene. Transcriptional activity is increased by coactivator PCBD1. The sequence is that of Hepatocyte nuclear factor 1-beta (HNF1B) from Sus scrofa (Pig).